Consider the following 59-residue polypeptide: Large ribosomal subunit protein uL30 (59 aa).

The protein belongs to the universal ribosomal protein uL30 family. In terms of assembly, part of the 50S ribosomal subunit.

The sequence is that of Large ribosomal subunit protein uL30 from Citrobacter koseri (strain ATCC BAA-895 / CDC 4225-83 / SGSC4696).